The sequence spans 375 residues: AT-rich binding protein (375 aa).

The segment at 29–52 (IVCHTCQEELQTQDQFWKHIQDEH) adopts a C2H2-type 1 zinc-finger fold. Over residues 110–119 (DDQREMDIHE) the composition is skewed to basic and acidic residues. Positions 110 to 142 (DDQREMDIHEAQQQQHQQQQQHQQQQQLQQQQQ) are disordered. Over residues 121–142 (QQQQHQQQQQHQQQQQLQQQQQ) the composition is skewed to low complexity. C2H2-type zinc fingers lie at residues 308–332 (YICDYETCGLKFKYKSRMELHRVVH) and 338–361 (FNCELCSASFKQSCNLSTHRKKKH).

Its subcellular location is the nucleus. May be a transcription factor for genes having (A+T) stretches in their promoter and/or enhancer regions. Binds to AT rich DNA. This Drosophila pseudoobscura pseudoobscura (Fruit fly) protein is AT-rich binding protein.